We begin with the raw amino-acid sequence, 207 residues long: Enolase (207 aa).

Gln-162 is a (2R)-2-phosphoglycerate binding site. The active-site Proton donor is Glu-204.

This sequence belongs to the enolase family.

It localises to the cytoplasm. Its subcellular location is the secreted. The protein localises to the cell surface. The enzyme catalyses (2R)-2-phosphoglycerate = phosphoenolpyruvate + H2O. The protein operates within carbohydrate degradation; glycolysis; pyruvate from D-glyceraldehyde 3-phosphate: step 4/5. In terms of biological role, catalyzes the reversible conversion of 2-phosphoglycerate (2-PG) into phosphoenolpyruvate (PEP). It is essential for the degradation of carbohydrates via glycolysis. This Campylobacter fetus protein is Enolase.